A 371-amino-acid chain; its full sequence is Neuropeptide Y receptor type 6 (371 aa).

Topologically, residues Met1–Pro31 are extracellular. Residues Asn11 and Asn18 are each glycosylated (N-linked (GlcNAc...) asparagine). A helical membrane pass occupies residues Phe32 to Gly52. Residues Asn53–Asp82 lie on the Cytoplasmic side of the membrane. The chain crosses the membrane as a helical span at residues Ile83–Val103. Over Phe104–Leu111 the chain is Extracellular. Cys109 and Cys196 are disulfide-bonded. The helical transmembrane segment at Thr112–Ile132 threads the bilayer. Topologically, residues Glu133 to His150 are cytoplasmic. Residues Ala151 to Leu171 traverse the membrane as a helical segment. The Extracellular portion of the chain corresponds to Ser172–Gln206. Asn182 is a glycosylation site (N-linked (GlcNAc...) asparagine). The helical transmembrane segment at Leu207–Ile227 threads the bilayer. The Cytoplasmic segment spans residues Cys228 to Leu263. The chain crosses the membrane as a helical span at residues Ile264–Phe284. The Extracellular segment spans residues Asp285–Asp297. A helical membrane pass occupies residues Leu298 to Tyr318. Residues Gly319–Ile371 are Cytoplasmic-facing. Cys336 carries S-palmitoyl cysteine lipidation.

This sequence belongs to the G-protein coupled receptor 1 family. As to expression, kidney and discrete regions of the hypothalamus including the suprachiasmatic nucleus, anterior hypothalamus, bed nucleus stria terminalis, and the ventromedial nucleus.

The protein localises to the cell membrane. In terms of biological role, receptor for neuropeptide Y and peptide YY. The rank order of affinity of this receptor for pancreatic polypeptides is NPY = PYY &gt;= NPY (2-36) = [Leu-31, Pro-34] NPY &gt; NPY (13-36) &gt; PP. The activity of this receptor is mediated by G proteins that inhibits adenylate cyclase activity. The sequence is that of Neuropeptide Y receptor type 6 (Npy6r) from Mus musculus (Mouse).